The following is a 209-amino-acid chain: Na(+)-translocating NADH-quinone reductase subunit D (209 aa).

5 helical membrane passes run leucine 42–isoleucine 62, valine 70–leucine 90, valine 103–methionine 123, phenylalanine 131–valine 151, and asparagine 178–leucine 198.

This sequence belongs to the NqrDE/RnfAE family. As to quaternary structure, composed of six subunits; NqrA, NqrB, NqrC, NqrD, NqrE and NqrF.

It is found in the cell inner membrane. It catalyses the reaction a ubiquinone + n Na(+)(in) + NADH + H(+) = a ubiquinol + n Na(+)(out) + NAD(+). NQR complex catalyzes the reduction of ubiquinone-1 to ubiquinol by two successive reactions, coupled with the transport of Na(+) ions from the cytoplasm to the periplasm. NqrA to NqrE are probably involved in the second step, the conversion of ubisemiquinone to ubiquinol. The polypeptide is Na(+)-translocating NADH-quinone reductase subunit D (Yersinia enterocolitica serotype O:8 / biotype 1B (strain NCTC 13174 / 8081)).